Reading from the N-terminus, the 505-residue chain is DEAD-box ATP-dependent RNA helicase 38 (505 aa).

Residues 1 to 81 (MADGGKPPTP…DQGPPLLDDS (81 aa)) form a disordered region. The span at 27-44 (KAAAAAEAASSSSSNEPA) shows a compositional bias: low complexity. A Q motif motif is present at residues 100–129 (AAFEDLKLTPELLKGLHDEMGFSRPSKIQA). One can recognise a Helicase ATP-binding domain in the interval 134–310 (MILTPPYKDL…TRVIKDGNQI (177 aa)). Residue 147–154 (AHNGSGKT) participates in ATP binding. The DEAD box motif lies at 254–257 (DEAD). In terms of domain architecture, Helicase C-terminal spans 338-493 (VIKDKIFEFG…EVRNWQSEED (156 aa)).

It belongs to the DEAD box helicase family. DDX19/DBP5 subfamily.

It is found in the cytoplasm. Its subcellular location is the nucleus. The enzyme catalyses ATP + H2O = ADP + phosphate + H(+). ATP-dependent RNA helicase essential for mRNA export from the nucleus. Plays an important role in the positive regulation of CBF/DREB transcription factors. The protein is DEAD-box ATP-dependent RNA helicase 38 of Oryza sativa subsp. japonica (Rice).